The sequence spans 133 residues: Snaclec botrocetin subunit alpha (133 aa).

3 disulfide bridges follow: cysteine 2–cysteine 13, cysteine 30–cysteine 128, and cysteine 103–cysteine 120. In terms of domain architecture, C-type lectin spans 9-129 (YEGNCYKFFQ…CAQKNPFVCK (121 aa)).

The protein belongs to the snaclec family. In terms of assembly, heterodimer of subunits alpha and beta; disulfide-linked. Botrocetin and vWF form a soluble complex. Expressed by the venom gland.

It is found in the secreted. In terms of biological role, snaclec that binds to von Willebrand factor (VWF) and induces its interaction with GPIbalpha (GP1BA) (via the vWF A1 domain), resulting in platelet aggregation. This chain is Snaclec botrocetin subunit alpha, found in Bothrops jararaca (Jararaca).